A 618-amino-acid chain; its full sequence is Cytosolic Fe-S cluster assembly factor NAR1 (618 aa).

Positions 20, 61, 64, 67, 212, 267, 471, and 475 each coordinate [4Fe-4S] cluster. 2 disordered regions span residues 495–516 (TSSI…TPQE) and 530–560 (SADS…PESR).

This sequence belongs to the NARF family.

Component of the cytosolic Fe/S protein assembly machinery. Required for maturation of extramitochondrial Fe/S proteins. May play a role in the transfer of pre-assembled Fe/S clusters to target apoproteins. The polypeptide is Cytosolic Fe-S cluster assembly factor NAR1 (NAR1) (Coccidioides immitis (strain RS) (Valley fever fungus)).